Consider the following 207-residue polypeptide: Large ribosomal subunit protein uL4 (207 aa).

A disordered region spans residues 48–89 (SHKVKNRSEVRGGGRKPWRQKGTGRARQGSIRSPQWRGGGVV). Positions 60–71 (GGRKPWRQKGTG) are enriched in basic residues.

The protein belongs to the universal ribosomal protein uL4 family. In terms of assembly, part of the 50S ribosomal subunit.

Its function is as follows. One of the primary rRNA binding proteins, this protein initially binds near the 5'-end of the 23S rRNA. It is important during the early stages of 50S assembly. It makes multiple contacts with different domains of the 23S rRNA in the assembled 50S subunit and ribosome. In terms of biological role, forms part of the polypeptide exit tunnel. This Bacillus velezensis (strain DSM 23117 / BGSC 10A6 / LMG 26770 / FZB42) (Bacillus amyloliquefaciens subsp. plantarum) protein is Large ribosomal subunit protein uL4.